The primary structure comprises 500 residues: MDHTEGSPAEEPPAHAPSPGKFGERPPPKRLTREAMRNYLKERGDQTVLILHAKVAQKSYGNEKRFFCPPPCVYLMGSGWKKKKEQMERDGCSEQESQPCAFIGIGNSDQEMQQLNLEGKNYCTAKTLYISDSDKRKHFMLSVKMFYGNSDDIGVFLSKRIKVISKPSKKKQSLKNADLCIASGTKVALFNRLRSQTVSTRYLHVEGGNFHASSQQWGAFFIHLLDDDESEGEEFTVRDGYIHYGQTVKLVCSVTGMALPRLIIRKVDKQTALLDADDPVSQLHKCAFYLKDTERMYLCLSQERIIQFQATPCPKEPNKEMINDGASWTIISTDKAEYTFYEGMGPVLAPVTPVPVVESLQLNGGGDVAMLELTGQNFTPNLRVWFGDVEAETMYRCGESMLCVVPDISAFREGWRWVRQPVQVPVTLVRNDGIIYSTSLTFTYTPEPGPRPHCSAAGAILRANSSQVPPNESNTNSEGSYTNASTNSTSVTSSTATVVS.

The disordered stretch occupies residues 1–30; it reads MDHTEGSPAEEPPAHAPSPGKFGERPPPKR. DNA-binding regions lie at residues 57 to 67 and 165 to 170; these read QKSYGNEKRFF and SKPSKK. The residue at position 175 (K175) is an N6-acetyllysine. Residues 192–197 are DNA-binding; the sequence is RLRSQT. The region spanning 355–445 is the IPT/TIG domain; sequence PVVESLQLNG…YSTSLTFTYT (91 aa). The segment covering 465–481 has biased composition (polar residues); that stretch reads SSQVPPNESNTNSEGSY. The tract at residues 465 to 500 is disordered; sequence SSQVPPNESNTNSEGSYTNASTNSTSVTSSTATVVS. The segment covering 482-500 has biased composition (low complexity); sequence TNASTNSTSVTSSTATVVS.

It belongs to the Su(H) family. Interacts with activated NOTCH1, NOTCH2 or NOTCH3. Interacts with MINT/SHARP. This interaction may mediate the recruitment of large corepressor complexes containing proteins such as HDAC1, HDAC2, NCOR2, SAP30, FHL1/KYOT2 and CIR1. Interacts with EP300, MAML1 and PTF1A. Interacts with RITA1/C12orf52, leading to nuclear export, prevent the interaction between RBPJ and NICD product and subsequent down-regulation of the Notch signaling pathway. Interacts with SNW1. Interacts with CHCHD2 and CXXC5. Interacts with BEND6 (via BEN domain). Interacts with NKAPL. Interacts with ZMIZ1. Interacts with RBM15. Interacts with L3MBTL3 and KDM1A; the interaction with KDM1A is weaker in the absence of L3MBTL3 and the interaction with L3MBTL3 is impaired by Notch-derived peptide containing the intracellular domain (NICD). In terms of assembly, (Microbial infection) Interacts with EBV EBNA2. Interacts with EBV EBNA3. Interacts with EBV EBNA4. Interacts with EBV EBNA6 (via N-terminus).

The protein localises to the nucleus. The protein resides in the cytoplasm. Transcriptional regulator that plays a central role in Notch signaling, a signaling pathway involved in cell-cell communication that regulates a broad spectrum of cell-fate determinations. Acts as a transcriptional repressor when it is not associated with Notch proteins. When associated with some NICD product of Notch proteins (Notch intracellular domain), it acts as a transcriptional activator that activates transcription of Notch target genes. Probably represses or activates transcription via the recruitment of chromatin remodeling complexes containing histone deacetylase or histone acetylase proteins, respectively. Specifically binds to the immunoglobulin kappa-type J segment recombination signal sequence. Binds specifically to methylated DNA. Binds to the oxygen responsive element of COX4I2 and activates its transcription under hypoxia conditions (4% oxygen). Negatively regulates the phagocyte oxidative burst in response to bacterial infection by repressing transcription of NADPH oxidase subunits. This Homo sapiens (Human) protein is Recombining binding protein suppressor of hairless.